The primary structure comprises 931 residues: Dual serine/threonine and tyrosine protein kinase (931 aa).

The segment at 1–24 (MEGDAPQRVSERVSGPGPGGGGGG) is disordered. Positions 397–424 (RKKENELYESLMNIANRKQEEMKDMICE) form a coiled coil. The Protein kinase domain maps to 654–908 (PKLGQELGRG…PLLGIVQPML (255 aa)). ATP-binding positions include 660–668 (LGRGQYGVV) and lysine 683. The active-site Proton acceptor is aspartate 779.

The protein belongs to the protein kinase superfamily. Ser/Thr protein kinase family.

It localises to the cytoplasm. The protein localises to the cell membrane. The protein resides in the apical cell membrane. Its subcellular location is the basolateral cell membrane. It is found in the cell junction. It catalyses the reaction L-seryl-[protein] + ATP = O-phospho-L-seryl-[protein] + ADP + H(+). The enzyme catalyses L-threonyl-[protein] + ATP = O-phospho-L-threonyl-[protein] + ADP + H(+). It carries out the reaction L-tyrosyl-[protein] + ATP = O-phospho-L-tyrosyl-[protein] + ADP + H(+). Its function is as follows. Acts as a positive regulator of ERK phosphorylation downstream of fibroblast growth factor-receptor activation. Involved in the regulation of both caspase-dependent apoptosis and caspase-independent cell death. In the skin, it plays a predominant role in suppressing caspase-dependent apoptosis in response to UV stress in a range of dermal cell types. This chain is Dual serine/threonine and tyrosine protein kinase (DSTYK), found in Canis lupus familiaris (Dog).